The following is a 130-amino-acid chain: MIHCKVQQWSPQYLRLPATGYEELTLTLNTSMLARMPEEEDQLFLVVGDSPSSTYVDWGEDCNSTRYPSYDHCTHKILYLGASAGTTRSKRLSATIGIRLSKGTGSNNVLGTPMYLLYNEMKTRIIESSK.

It carries out the reaction [trehalose-6-phosphate synthase]-L-cysteine + S-adenosyl-L-methionine = [trehalose-6-phosphate synthase]-S-methyl-L-cysteine + S-adenosyl-L-homocysteine + H(+). Its function is as follows. S-adenosyl-L-methionine-dependent protein-cysteine S-methyltransferase with broad substrate specificity. Methylates trehalose-6-phosphate synthase (TPS), enhancing its enzymatic activity and promoting trehalose synthesis upon entry of cells into stationary phase. This Saccharomyces cerevisiae (Baker's yeast) protein is Cysteine methyltransferase.